A 141-amino-acid chain; its full sequence is Hemoglobin subunit alpha-1/2 (141 aa).

The 141-residue stretch at 1 to 141 (VLSPADKTNV…VSTVLTSKYR (141 aa)) folds into the Globin domain. Ser-3 bears the Phosphoserine mark. An N6-succinyllysine modification is found at Lys-7. Thr-8 bears the Phosphothreonine mark. Residue Lys-11 is modified to N6-succinyllysine. At Lys-16 the chain carries N6-acetyllysine; alternate. Lys-16 carries the N6-succinyllysine; alternate modification. Position 24 is a phosphotyrosine (Tyr-24). Ser-35 is subject to Phosphoserine. Lys-40 bears the N6-succinyllysine mark. Residue Ser-49 is modified to Phosphoserine. His-58 contributes to the O2 binding site. His-87 is a heme b binding site. Position 102 is a phosphoserine (Ser-102). Thr-108 is subject to Phosphothreonine. Residue Ser-124 is modified to Phosphoserine. 2 positions are modified to phosphothreonine: Thr-134 and Thr-137. Ser-138 carries the phosphoserine modification.

Belongs to the globin family. Heterotetramer of two alpha chains and two beta chains. Red blood cells.

In terms of biological role, involved in oxygen transport from the lung to the various peripheral tissues. This Mustela putorius (European polecat) protein is Hemoglobin subunit alpha-1/2.